The primary structure comprises 74 residues: Sec-independent protein translocase protein TatA (74 aa).

The helical transmembrane segment at 1–21 (MGTFSIWHWLIVLLVVVVVFG) threads the bilayer. The tract at residues 50-74 (TAPAGQVANQSTADQTIDVQTKPKG) is disordered. The span at 56 to 68 (VANQSTADQTIDV) shows a compositional bias: polar residues.

The protein belongs to the TatA/E family. As to quaternary structure, the Tat system comprises two distinct complexes: a TatABC complex, containing multiple copies of TatA, TatB and TatC subunits, and a separate TatA complex, containing only TatA subunits. Substrates initially bind to the TatABC complex, which probably triggers association of the separate TatA complex to form the active translocon.

It localises to the cell inner membrane. Its function is as follows. Part of the twin-arginine translocation (Tat) system that transports large folded proteins containing a characteristic twin-arginine motif in their signal peptide across membranes. TatA could form the protein-conducting channel of the Tat system. The polypeptide is Sec-independent protein translocase protein TatA (Verminephrobacter eiseniae (strain EF01-2)).